The primary structure comprises 428 residues: ETS domain-containing protein Elk-1 (428 aa).

A DNA-binding region (ETS) is located at residues V5–V86. Disordered stretches follow at residues A121–S149, Q165–E205, and N228–P358. Over residues P177–E205 the composition is skewed to low complexity. Glycyl lysine isopeptide (Lys-Gly) (interchain with G-Cter in SUMO) cross-links involve residues K230, K249, and K254. Positions V248–G261 are enriched in basic and acidic residues. Position 324 is a phosphoserine; by MAPK1 (S324). A phosphothreonine; by MAPK1 mark is found at T336, T353, T363, and T368. The interval G349–S399 is sufficient for interaction with MAD2L2. Residue T381 is glycosylated (O-linked (GlcNAc) threonine). S383 bears the Phosphoserine; by MAPK1 and MAPK8 mark. A Phosphoserine; by MAPK1 modification is found at S389. T417 carries the post-translational modification Phosphothreonine; by MAPK1. Phosphoserine; by MAPK1 is present on S422.

The protein belongs to the ETS family. In terms of assembly, interacts in its sumoylated form with PIAS2/PIASX which enhances its transcriptional activator activity. Interacts with MAD2L2; the interaction is direct and promotes phosphorylation by the kinases MAPK8 and/or MAPK9. Interacts with POU1F1. Sumoylation represses transcriptional activator activity as it results in recruitment of HDAC2 to target gene promoters which leads to decreased histone acetylation and reduced transactivator activity. It also regulates nuclear retention. Post-translationally, on mitogenic stimulation, phosphorylated on C-terminal serine and threonine residues by MAPK1. Ser-383 and Ser-389 are the preferred sites for MAPK1. In vitro, phosphorylation by MAPK1 potentiates ternary complex formation with the serum responses factors, SRE and SRF. Also phosphorylated on Ser-383 by MAPK8 and/or MAKP9. Phosphorylation leads to loss of sumoylation and restores transcriptional activator activity. Phosphorylated and activated by CAMK4, MAPK11, MAPK12 and MAPK14. Upon bFGF stimulus, phosphorylated by PAK1. Phosphorylated by PRP4K at Thr-417; phosphorylation activation ELK1 transcriptional activity. Lung and testis.

It is found in the nucleus. In terms of biological role, transcription factor that binds to purine-rich DNA sequences. Forms a ternary complex with SRF and the ETS and SRF motifs of the serum response element (SRE) on the promoter region of immediate early genes such as FOS and IER2. Induces target gene transcription upon JNK and MAPK-signaling pathways stimulation. This Homo sapiens (Human) protein is ETS domain-containing protein Elk-1.